The chain runs to 1292 residues: Epidermal growth factor receptor (1292 aa).

Topologically, residues 1 to 641 (MYNNYNLCHI…AGLIENELQP (641 aa)) are extracellular. Asn-31, Asn-224, Asn-263, Asn-323, Asn-342, Asn-600, and Asn-605 each carry an N-linked (GlcNAc...) asparagine glycan. A helical transmembrane segment spans residues 642–662 (AILAGVAVFALAFLVVAAIIM). At 663–1292 (YFWRVRAKAK…KPLRKNETTV (630 aa)) the chain is on the cytoplasmic side. Thr-675 is modified (phosphothreonine; by PKC). The Protein kinase domain occupies 711–978 (MRKGGILGYG…KMSRDPGRYL (268 aa)). ATP is bound by residues 717–725 (LGYGAFGNV) and Lys-744. Catalysis depends on Asp-836, which acts as the Proton acceptor. Positions 1022-1066 (PKSRAPIPPGLSASSTSGSPPNTPVKPCWPNGKPLAADSPTPQNQ) are disordered. Position 1166 is a phosphotyrosine; by autocatalysis (Tyr-1166). The tract at residues 1253-1292 (SQVRQRSSEEESDHEYYNDFDRLERELQPLKPLRKNETTV) is disordered. A compositionally biased stretch (basic and acidic residues) spans 1258 to 1292 (RSSEEESDHEYYNDFDRLERELQPLKPLRKNETTV).

The protein belongs to the protein kinase superfamily. Tyr protein kinase family. EGF receptor subfamily.

The protein localises to the membrane. The catalysed reaction is L-tyrosyl-[protein] + ATP = O-phospho-L-tyrosyl-[protein] + ADP + H(+). With respect to regulation, activated by MRJP1 during queen determination of honeybee larvae. Functionally, upon binding to its ligands, transduces the signal through the ras-raf-MAPK pathway and is involved in a myriad of developmental decisions. Involved in the determination of adult size, ovary development, and development timing, especially during queen determination of honeybee larvae. May have an important role in the prolongation of longevity in queens. The chain is Epidermal growth factor receptor (Egfr) from Apis mellifera (Honeybee).